The sequence spans 373 residues: Gibberellin 3-beta-dioxygenase 2 (373 aa).

A Fe2OG dioxygenase domain is found at 203-304 (MTATVHLNWY…RVSLGYFLGP (102 aa)). Tyr212 lines the 2-oxoglutarate pocket. Fe cation is bound by residues His227, Asp229, and His285. 2 residues coordinate 2-oxoglutarate: Arg295 and Ser297.

The protein belongs to the iron/ascorbate-dependent oxidoreductase family. It depends on L-ascorbate as a cofactor. The cofactor is Fe(2+). As to expression, highly expressed in elongating leaves. Expressed in unopened flowers. Expressed at low levels in leaf blades, shoots, rachis, stems and young panicles.

It carries out the reaction gibberellin A20 + 2-oxoglutarate + O2 = gibberellin A1 + succinate + CO2. The protein operates within plant hormone biosynthesis; gibberellin biosynthesis. In terms of biological role, catalyzes the 3-beta-hydroxylation of the inactive gibberellin precursors, leading to the formation of bioactive gibberellins. In vitro, converts the precursors GA20, GA5, GA44 and GA9 to the corresponding 3-beta-hydroxylated active products GA1, GA3, GA38 and GA4, respectively. Involved in the production of bioactive GA for vegetative growth and development. Controls the elongation of the vegetative shoot and plant height by the regulation of active gibberellin levels. This is Gibberellin 3-beta-dioxygenase 2 from Oryza sativa subsp. japonica (Rice).